A 595-amino-acid chain; its full sequence is DNA-binding protein REB1 (595 aa).

Composition is skewed to basic and acidic residues over residues 25-46 (KSGE…KEQD) and 54-71 (DPGR…RDAN). Residues 25-208 (KSGEDDAVNK…IDDHVDDVSV (184 aa)) form a disordered region. Over residues 75–84 (AVAAAAVAAA) the composition is skewed to low complexity. Basic residues predominate over residues 114 to 123 (KKSKKNKNKL). Positions 163–176 (NIASQHPDFQQYLN) are enriched in polar residues. Residues 182–205 (EPKKEKSEERSYGDLSNIDDHVDD) show a composition bias toward basic and acidic residues. The HTH myb-type domain maps to 333–384 (HIFEQRGKWTPEEDAELARWCAEKEGQWSNIGKVLGRMPEDCRDRWRNYVKC). The segment at residues 360-382 (WSNIGKVLGRMPEDCRDRWRNYV) is a DNA-binding region (H-T-H motif). The Myb-like domain maps to 385-490 (GPNRAANKWS…QCRYKWNKLL (106 aa)). The disordered stretch occupies residues 414 to 456 (TAYEDGEDDEMKDSSTKIEDSGDADMLDVQDSDKKPSISNSKK). The segment covering 434–443 (SGDADMLDVQ) has biased composition (acidic residues).

It localises to the nucleus. In terms of biological role, DNA-binding protein that recognizes sites within both the enhancer and the promoter of rRNA transcription, as well as upstream of many genes transcribed by RNA polymerase II. It is essential for cell growth. May stimulate or inhibit transcription. Specifically recognizes the sequence 5'-CCGGGTA-3' or 5'-CGGGTRR-3' (where R is any purine). The protein is DNA-binding protein REB1 (REB1) of Kluyveromyces lactis (strain ATCC 8585 / CBS 2359 / DSM 70799 / NBRC 1267 / NRRL Y-1140 / WM37) (Yeast).